Here is a 600-residue protein sequence, read N- to C-terminus: Repressor of filamentous growth 1 (600 aa).

The span at 1-14 (MSTAIYYSTHNNMH) shows a compositional bias: polar residues. Disordered regions lie at residues 1–59 (MSTA…NSAN), 112–160 (NGGY…TDIS), 180–200 (GIDGNFSHNNNNNNNNNNNNN), 266–337 (AEEE…SRDN), 427–549 (STTS…GYDN), and 564–600 (QQGLQVQQQGQHYNSGLHAAQHYQQQQQQHHQQQPPQ). Low complexity-rich tracts occupy residues 20-39 (TNGSGSTTSGNPGANPSNPN) and 47-59 (INNNSNIGLNSAN). A compositionally biased stretch (polar residues) spans 131-160 (FDTSYSNQTTPTSAYTNFNNDSTHSPTDIS). Residues 188–200 (NNNNNNNNNNNNN) show a composition bias toward low complexity. Residues 212 to 281 (IPRPRNAFIL…NHAKKYPGYR (70 aa)) constitute a DNA-binding region (HMG box). Basic residues predominate over residues 272 to 289 (NHAKKYPGYRYTPRRNGR). A compositionally biased stretch (low complexity) spans 297–312 (KNKPLPNNKSNSISGM). Over residues 313 to 322 (SGSGGGGGSI) the composition is skewed to gly residues. Residues 427–470 (STTSTTAPTTTTTTTTNASSIGLSVPPTATTTSTSSQPTSANSQ) show a composition bias toward low complexity. Positions 481-496 (PVSSTHHQSSISEIAA) are enriched in polar residues. A compositionally biased stretch (low complexity) spans 497 to 506 (QQQQQQQQQQ). Positions 507 to 547 (FMYNTNYSTIPPNNTTTMQQHSAGTGNDYSLNGNNSGNTGY) are enriched in polar residues. Low complexity-rich tracts occupy residues 564 to 574 (QQGLQVQQQGQ) and 581 to 600 (HAAQHYQQQQQQHHQQQPPQ).

It is found in the nucleus. In terms of biological role, transcription regulator that functions in both the positive and negative regulation of filamentous growth, depending upon the environmental conditions. Recruits the TUP1/SSN6 general repression complex to achieve repression. Regulates genes encoding cell wall components that are specifically expressed in the filamentous forms such as HWP1, RBT1, HYR1, ECE1, ALS1, RBT4 and RBT5. The polypeptide is Repressor of filamentous growth 1 (RFG1) (Candida albicans (strain SC5314 / ATCC MYA-2876) (Yeast)).